The chain runs to 77 residues: UPF0291 protein EAT1b_0405 (77 aa).

The interval 53 to 77 is disordered; it reads KVVDPDGNDVTPEKLKEDQKRYRGE. Residues 63 to 77 show a composition bias toward basic and acidic residues; the sequence is TPEKLKEDQKRYRGE.

Belongs to the UPF0291 family.

It localises to the cytoplasm. This Exiguobacterium sp. (strain ATCC BAA-1283 / AT1b) protein is UPF0291 protein EAT1b_0405.